Reading from the N-terminus, the 1213-residue chain is DNA-directed RNA polymerase subunit beta' (1213 aa).

Residues Cys-60, Cys-62, Cys-75, and Cys-78 each contribute to the Zn(2+) site. Positions 450, 452, and 454 each coordinate Mg(2+). Residues Cys-819, Cys-893, Cys-900, and Cys-903 each coordinate Zn(2+).

Belongs to the RNA polymerase beta' chain family. The RNAP catalytic core consists of 2 alpha, 1 beta, 1 beta' and 1 omega subunit. When a sigma factor is associated with the core the holoenzyme is formed, which can initiate transcription. Mg(2+) is required as a cofactor. Zn(2+) serves as cofactor.

It carries out the reaction RNA(n) + a ribonucleoside 5'-triphosphate = RNA(n+1) + diphosphate. Its function is as follows. DNA-dependent RNA polymerase catalyzes the transcription of DNA into RNA using the four ribonucleoside triphosphates as substrates. The protein is DNA-directed RNA polymerase subunit beta' of Streptococcus pyogenes serotype M2 (strain MGAS10270).